The chain runs to 294 residues: Decaprenyl-diphosphate synthase subunit 2 (294 aa).

The protein belongs to the FPP/GGPP synthase family. Heterotetramer of 2 dps1 and 2 dlp1 subunits.

The protein resides in the mitochondrion. The enzyme catalyses 7 isopentenyl diphosphate + (2E,6E)-farnesyl diphosphate = all-trans-decaprenyl diphosphate + 7 diphosphate. It participates in cofactor biosynthesis; ubiquinone biosynthesis. Functionally, supplies decaprenyl diphosphate, the precursor for the side chain of the isoprenoid quinones ubiquinone-10. The sequence is that of Decaprenyl-diphosphate synthase subunit 2 (dlp1) from Schizosaccharomyces pombe (strain 972 / ATCC 24843) (Fission yeast).